Consider the following 84-residue polypeptide: MSIFPIVLALLLIGLEETEALDGYPLSKINNCKIYCPDDDVCKWTCKHRAGATNGKGDCIWYGCYCYDVAPGTKMYPGSSPCYA.

The signal sequence occupies residues 1–20 (MSIFPIVLALLLIGLEETEA). The 63-residue stretch at 21-83 (LDGYPLSKIN…KMYPGSSPCY (63 aa)) folds into the LCN-type CS-alpha/beta domain. 4 cysteine pairs are disulfide-bonded: cysteine 32-cysteine 82, cysteine 36-cysteine 59, cysteine 42-cysteine 64, and cysteine 46-cysteine 66.

As to expression, expressed by the venom gland.

The protein resides in the secreted. Inhibits voltage-gated sodium channels (Nav). The protein is Toxin To7 of Tityus obscurus (Amazonian scorpion).